The primary structure comprises 191 residues: Threonylcarbamoyl-AMP synthase (191 aa).

A YrdC-like domain is found at 7–191 (QSELNDALKI…FHASTGKRLR (185 aa)).

This sequence belongs to the SUA5 family. TsaC subfamily.

It localises to the cytoplasm. It catalyses the reaction L-threonine + hydrogencarbonate + ATP = L-threonylcarbamoyladenylate + diphosphate + H2O. Its function is as follows. Required for the formation of a threonylcarbamoyl group on adenosine at position 37 (t(6)A37) in tRNAs that read codons beginning with adenine. Catalyzes the conversion of L-threonine, HCO(3)(-)/CO(2) and ATP to give threonylcarbamoyl-AMP (TC-AMP) as the acyladenylate intermediate, with the release of diphosphate. The polypeptide is Threonylcarbamoyl-AMP synthase (Psychromonas ingrahamii (strain DSM 17664 / CCUG 51855 / 37)).